Here is a 301-residue protein sequence, read N- to C-terminus: Peptidyl-prolyl isomerase CWC27 (301 aa).

The PPIase cyclophilin-type domain maps to 9 to 159; sequence TTAKCILYTT…YPAVLKDVEI (151 aa). The segment at 251–280 is disordered; sequence TELHDNVDEATTKETESQENIKEEPMDKRE.

This sequence belongs to the cyclophilin-type PPIase family. CWC27 subfamily. Belongs to the CWC complex (or CEF1-associated complex), a spliceosome subcomplex composed of the U2, U5 and U6 snRNAs and at least BUD13, BUD31, BRR2, CDC40, CEF1, CLF1, CUS1, CWC2, CWC15, CWC21, CWC22, CWC23, CWC24, CWC25, CWC27, ECM2, HSH155, IST3, ISY1, LEA1, MSL1, NTC20, PRP8, PRP9, PRP11, PRP19, PRP21, PRP22, PRP45, PRP46, SLU7, SMB1, SMD1, SMD2, SMD3, SMX2, SMX3, SNT309, SNU114, SPP2, SYF1, SYF2, RSE1 and YJU2.

The protein localises to the cytoplasm. Its subcellular location is the nucleus. The enzyme catalyses [protein]-peptidylproline (omega=180) = [protein]-peptidylproline (omega=0). PPIases accelerate the folding of proteins. Catalyzes the cis-trans isomerization of proline imidic peptide bonds in oligopeptides. Involved in pre-mRNA splicing. This is Peptidyl-prolyl isomerase CWC27 (CWC27) from Saccharomyces cerevisiae (strain ATCC 204508 / S288c) (Baker's yeast).